The sequence spans 310 residues: Isoflavone reductase homolog A622 (310 aa).

NADP(+) is bound by residues 13-19 (GGTGYIG), R38, and K47. The Proton acceptor role is filled by K135. R139 contacts NADP(+).

Belongs to the NmrA-type oxidoreductase family. Isoflavone reductase subfamily. As to quaternary structure, monomer. Expressed in roots and stems.

The protein localises to the cytoplasm. It participates in alkaloid biosynthesis; nicotine biosynthesis. Functionally, NADPH-binding protein. Involved in the biosynthesis of pyridine alkaloid natural products, leading mainly to the production of anabasine, anatabine, nicotine and nornicotine, effective deterrents against herbivores with antiparasitic and pesticide properties (neurotoxins); nornicotine serves as the precursor in the synthesis of the carcinogen compound N'-nitrosonornicotine (NNN). Reductase involved in a late step of tobacco alkaloid biosynthesis. Triggers either the formation of a nicotinic acid-derived precursor or the final condensation reaction of tobacco alkaloids. This is Isoflavone reductase homolog A622 from Nicotiana sylvestris (Wood tobacco).